A 141-amino-acid polypeptide reads, in one-letter code: Venom protein family 1 protein 1 (141 aa).

The signal sequence occupies residues 1-17 (MKSFIVVLCCLFAITYG). A disulfide bridge links cysteine 62 with cysteine 139.

The protein belongs to the insect vpf1 family. As to expression, expressed by the venom gland (posterior main gland) (at protein level).

The protein resides in the secreted. The protein is Venom protein family 1 protein 1 of Platymeris rhadamanthus (Red spot assassin bug).